We begin with the raw amino-acid sequence, 91 residues long: Putative septation protein SpoVG (91 aa).

It belongs to the SpoVG family.

In terms of biological role, could be involved in septation. This chain is Putative septation protein SpoVG, found in Caldanaerobacter subterraneus subsp. tengcongensis (strain DSM 15242 / JCM 11007 / NBRC 100824 / MB4) (Thermoanaerobacter tengcongensis).